The sequence spans 317 residues: D-alanine--D-alanine ligase (317 aa).

The 197-residue stretch at 103-299 (KHIFRSLNID…FNELVKIIIE (197 aa)) folds into the ATP-grasp domain. Residue 130–183 (KIDYPYVLKPINEGSSIGVYIIFSHEDYLELKDNSSTIMEKMIVEEYIPGIELH) coordinates ATP. Asp251, Glu265, and Asn267 together coordinate Mg(2+).

It belongs to the D-alanine--D-alanine ligase family. It depends on Mg(2+) as a cofactor. Mn(2+) is required as a cofactor.

Its subcellular location is the cytoplasm. It catalyses the reaction 2 D-alanine + ATP = D-alanyl-D-alanine + ADP + phosphate + H(+). It participates in cell wall biogenesis; peptidoglycan biosynthesis. Its function is as follows. Cell wall formation. In Wolbachia sp. subsp. Drosophila simulans (strain wRi), this protein is D-alanine--D-alanine ligase.